Here is a 124-residue protein sequence, read N- to C-terminus: Heat-labile enterotoxin B chain (124 aa).

Positions 1–21 (MNKVKFYVLFTALLSSLCAHG) are cleaved as a signal peptide. A disulfide bond links C30 and C107.

In terms of assembly, heterohexamer of one A chain and of five B chains.

Its function is as follows. The biological activity of the toxin is produced by the A chain, which activates intracellular adenyl cyclase. The sequence is that of Heat-labile enterotoxin B chain (eltB) from Escherichia coli.